The following is a 96-amino-acid chain: ATP-dependent Clp protease adapter protein ClpS (96 aa).

It belongs to the ClpS family. As to quaternary structure, binds to the N-terminal domain of the chaperone ClpA.

Involved in the modulation of the specificity of the ClpAP-mediated ATP-dependent protein degradation. In Campylobacter jejuni subsp. jejuni serotype O:6 (strain 81116 / NCTC 11828), this protein is ATP-dependent Clp protease adapter protein ClpS.